Reading from the N-terminus, the 234-residue chain is Gem-associated protein 8 (234 aa).

The disordered stretch occupies residues 60 to 116 (LAQSPAAKGGTSPKSRSKSPSASGDACRRRSRPGKPGPQRRSTEKPARFAEDNDSES). A compositionally biased stretch (low complexity) spans 67 to 83 (KGGTSPKSRSKSPSASG). Basic and acidic residues predominate over residues 100–110 (RSTEKPARFAE). A coiled-coil region spans residues 130-153 (ITDELRQYFAETEQHREELRRQHQ).

As to quaternary structure, part of the core SMN complex that contains SMN1, GEMIN2/SIP1, DDX20/GEMIN3, GEMIN4, GEMIN5, GEMIN6, GEMIN7, GEMIN8 and STRAP/UNRIP. Part of the SMN-Sm complex that contains SMN1, GEMIN2/SIP1, DDX20/GEMIN3, GEMIN4, GEMIN5, GEMIN6, GEMIN7, GEMIN8, STRAP/UNRIP and the Sm proteins SNRPB, SNRPD1, SNRPD2, SNRPD3, SNRPE, SNRPF and SNRPG. Interacts with GEMIN6; the interaction is direct. Interacts with GEMIN7; the interaction is direct. Interacts with SMN1; the interaction is direct. Interacts with GEMIN4; the interaction is direct.

The protein resides in the nucleus. It localises to the gem. Its subcellular location is the cytoplasm. Its function is as follows. The SMN complex catalyzes the assembly of small nuclear ribonucleoproteins (snRNPs), the building blocks of the spliceosome, and thereby plays an important role in the splicing of cellular pre-mRNAs. Most spliceosomal snRNPs contain a common set of Sm proteins SNRPB, SNRPD1, SNRPD2, SNRPD3, SNRPE, SNRPF and SNRPG that assemble in a heptameric protein ring on the Sm site of the small nuclear RNA to form the core snRNP (Sm core). In the cytosol, the Sm proteins SNRPD1, SNRPD2, SNRPE, SNRPF and SNRPG are trapped in an inactive 6S pICln-Sm complex by the chaperone CLNS1A that controls the assembly of the core snRNP. To assemble core snRNPs, the SMN complex accepts the trapped 5Sm proteins from CLNS1A forming an intermediate. Binding of snRNA inside 5Sm triggers eviction of the SMN complex, thereby allowing binding of SNRPD3 and SNRPB to complete assembly of the core snRNP. This is Gem-associated protein 8 (GEMIN8) from Bos taurus (Bovine).